We begin with the raw amino-acid sequence, 418 residues long: tRNA wybutosine-synthesizing protein 2 (418 aa).

Residues Ser228, Lys235, 275–276, and 302–303 each bind S-adenosyl-L-methionine; these read EI and EN.

It belongs to the class I-like SAM-binding methyltransferase superfamily. TRM5/TYW2 family.

It is found in the cytoplasm. It localises to the nucleus. It catalyses the reaction 4-demethylwyosine(37) in tRNA(Phe) + S-adenosyl-L-methionine = 4-demethyl-7-[(3S)-3-amino-3-carboxypropyl]wyosine(37) in tRNA(Phe) + S-methyl-5'-thioadenosine + H(+). The protein operates within tRNA modification; wybutosine-tRNA(Phe) biosynthesis. S-adenosyl-L-methionine-dependent transferase that acts as a component of the wybutosine biosynthesis pathway. Wybutosine is a hyper modified guanosine with a tricyclic base found at the 3'-position adjacent to the anticodon of eukaryotic phenylalanine tRNA. Catalyzes the transfer of the alpha-amino-alpha-carboxypropyl (acp) group from S-adenosyl-L-methionine to the C-7 position of 4-demethylwyosine (imG-14) to produce wybutosine-86. This Schizosaccharomyces pombe (strain 972 / ATCC 24843) (Fission yeast) protein is tRNA wybutosine-synthesizing protein 2 (trm12).